Consider the following 204-residue polypeptide: RNA-free ribonuclease P (204 aa).

It belongs to the HARP family.

The catalysed reaction is Endonucleolytic cleavage of RNA, removing 5'-extranucleotides from tRNA precursor.. Functionally, RNA-free RNase P that catalyzes the removal of the 5'-leader sequence from pre-tRNA to produce the mature 5'-terminus. In Pyrococcus horikoshii (strain ATCC 700860 / DSM 12428 / JCM 9974 / NBRC 100139 / OT-3), this protein is RNA-free ribonuclease P.